The following is a 213-amino-acid chain: GTP cyclohydrolase 1 (213 aa).

The tract at residues 1–27 is disordered; the sequence is MDDVVKSLLQRTTSSLTKPAPARPSRE. 3 residues coordinate Zn(2+): cysteine 100, histidine 103, and cysteine 172.

This sequence belongs to the GTP cyclohydrolase I family. As to quaternary structure, homomer.

The catalysed reaction is GTP + H2O = 7,8-dihydroneopterin 3'-triphosphate + formate + H(+). Its pathway is cofactor biosynthesis; 7,8-dihydroneopterin triphosphate biosynthesis; 7,8-dihydroneopterin triphosphate from GTP: step 1/1. This is GTP cyclohydrolase 1 from Beijerinckia indica subsp. indica (strain ATCC 9039 / DSM 1715 / NCIMB 8712).